The primary structure comprises 156 residues: Ribosomal RNA large subunit methyltransferase H (156 aa).

S-adenosyl-L-methionine contacts are provided by residues L73, G104, and 123–128 (IGPLTL).

It belongs to the RNA methyltransferase RlmH family. Homodimer.

The protein resides in the cytoplasm. The catalysed reaction is pseudouridine(1915) in 23S rRNA + S-adenosyl-L-methionine = N(3)-methylpseudouridine(1915) in 23S rRNA + S-adenosyl-L-homocysteine + H(+). Specifically methylates the pseudouridine at position 1915 (m3Psi1915) in 23S rRNA. The protein is Ribosomal RNA large subunit methyltransferase H of Xanthomonas campestris pv. campestris (strain 8004).